Here is a 325-residue protein sequence, read N- to C-terminus: Large ribosomal subunit protein uL4m (325 aa).

A disordered region spans residues 113–158; sequence ASTKTRYEVHGSHKKMSPQKGTGNARRGTRQSPLMKGGGKTFGPKP.

This sequence belongs to the universal ribosomal protein uL4 family. As to quaternary structure, component of the mitochondrial large ribosomal subunit (mt-LSU). Mature N.crassa 74S mitochondrial ribosomes consist of a small (37S) and a large (54S) subunit. The 37S small subunit contains a 16S ribosomal RNA (16S mt-rRNA) and 32 different proteins. The 54S large subunit contains a 23S rRNA (23S mt-rRNA) and 42 different proteins.

Its subcellular location is the mitochondrion. In terms of biological role, component of the mitochondrial ribosome (mitoribosome), a dedicated translation machinery responsible for the synthesis of mitochondrial genome-encoded proteins, including at least some of the essential transmembrane subunits of the mitochondrial respiratory chain. The mitoribosomes are attached to the mitochondrial inner membrane and translation products are cotranslationally integrated into the membrane. In Neurospora crassa (strain ATCC 24698 / 74-OR23-1A / CBS 708.71 / DSM 1257 / FGSC 987), this protein is Large ribosomal subunit protein uL4m (yml6).